A 66-amino-acid polypeptide reads, in one-letter code: Large ribosomal subunit protein uL29 (66 aa).

It belongs to the universal ribosomal protein uL29 family.

This Borrelia duttonii (strain Ly) protein is Large ribosomal subunit protein uL29.